We begin with the raw amino-acid sequence, 546 residues long: Cytochrome P450 monooxygenase alnH (546 aa).

A helical membrane pass occupies residues 11 to 31 (VPYSVPLLGSTVVILIGFIAI). Residues Asn-146, Asn-258, and Asn-425 are each glycosylated (N-linked (GlcNAc...) asparagine). Heme is bound at residue Cys-445.

It belongs to the cytochrome P450 family. It depends on heme as a cofactor.

It is found in the membrane. It functions in the pathway polyketide biosynthesis. Functionally, cytochrome P450 monooxygenase; part of the gene cluster that mediates the biosynthesis of asperlin, a polyketide showing anti-inflammatory, antitumor and antibiotic activities. The first step of the asperlin biosynthesis is the production of the intermediate 2,4,6-octatrienoic acid by the highly redusing polyketide synthase alnA with cleavage of the PKS product by the esterase alnB. 2,4,6-octatrienoic acid is further converted to asperlin via several steps involving the remaining enzymes from the cluster. This Emericella nidulans (strain FGSC A4 / ATCC 38163 / CBS 112.46 / NRRL 194 / M139) (Aspergillus nidulans) protein is Cytochrome P450 monooxygenase alnH.